Reading from the N-terminus, the 149-residue chain is Large ribosomal subunit protein uL13 (149 aa).

This sequence belongs to the universal ribosomal protein uL13 family. Part of the 50S ribosomal subunit.

In terms of biological role, this protein is one of the early assembly proteins of the 50S ribosomal subunit, although it is not seen to bind rRNA by itself. It is important during the early stages of 50S assembly. This chain is Large ribosomal subunit protein uL13, found in Chlorobium chlorochromatii (strain CaD3).